Consider the following 114-residue polypeptide: Class I hydrophobin 1 (114 aa).

Positions 1-20 (MQFTKMSAFATLALATLAAA) are cleaved as a signal peptide. 4 disulfides stabilise this stretch: C33-C93, C40-C87, C41-C74, and C94-C107.

This sequence belongs to the fungal hydrophobin family. In terms of assembly, self-assembles to form functional amyloid fibrils called rodlets. Self-assembly into fibrillar rodlets occurs spontaneously at hydrophobic:hydrophilic interfaces and the rodlets further associate laterally to form amphipathic monolayers.

The protein resides in the secreted. The protein localises to the cell wall. Its function is as follows. Aerial growth, conidiation, and dispersal of filamentous fungi in the environment rely upon a capability of their secreting small amphipathic proteins called hydrophobins (HPBs) with low sequence identity. Class I can self-assemble into an outermost layer of rodlet bundles on aerial cell surfaces, conferring cellular hydrophobicity that supports fungal growth, development and dispersal; whereas Class II form highly ordered films at water-air interfaces through intermolecular interactions but contribute nothing to the rodlet structure. Pnh1 is a class I hydrophobin that might be involved in the attachment of the hydrophilic wall of hyphae to the hydrophobic surface of wood under inorganic phosphate (Pi)-deficient conditions and enable the mycelium to degrade efficiently the components of wood and to acquire nutrients containing Pi. The chain is Class I hydrophobin 1 from Pholiota nameko.